Consider the following 291-residue polypeptide: tRNA dimethylallyltransferase (291 aa).

An ATP-binding site is contributed by 11–18 (GPTASGKS). 13–18 (TASGKS) contacts substrate. Positions 42-45 (DSMQ) are interaction with substrate tRNA.

The protein belongs to the IPP transferase family. In terms of assembly, monomer. Mg(2+) is required as a cofactor.

The enzyme catalyses adenosine(37) in tRNA + dimethylallyl diphosphate = N(6)-dimethylallyladenosine(37) in tRNA + diphosphate. Its function is as follows. Catalyzes the transfer of a dimethylallyl group onto the adenine at position 37 in tRNAs that read codons beginning with uridine, leading to the formation of N6-(dimethylallyl)adenosine (i(6)A). This Rubrobacter xylanophilus (strain DSM 9941 / JCM 11954 / NBRC 16129 / PRD-1) protein is tRNA dimethylallyltransferase.